The primary structure comprises 427 residues: Peptidase B (427 aa).

Mn(2+)-binding residues include Lys195 and Asp200. Residue Lys207 is part of the active site. Residues Asp218, Asp277, and Glu279 each contribute to the Mn(2+) site. Arg281 is a catalytic residue.

It belongs to the peptidase M17 family. As to quaternary structure, homohexamer. It depends on Mn(2+) as a cofactor.

It localises to the cytoplasm. It catalyses the reaction Release of an N-terminal amino acid, Xaa, from a peptide or arylamide. Xaa is preferably Glu or Asp but may be other amino acids, including Leu, Met, His, Cys and Gln.. Functionally, probably plays an important role in intracellular peptide degradation. The protein is Peptidase B of Escherichia coli O7:K1 (strain IAI39 / ExPEC).